The following is a 2601-amino-acid chain: Centrosomal protein of 295 kDa (2601 aa).

The segment at 1-560 (MKRKVVNTHK…KKTQPTGVGI (560 aa)) is necessary for centriole targeting and microtubule association. Serine 14 carries the post-translational modification Phosphoserine. Coiled-coil stretches lie at residues 207–273 (KRPD…EDLA) and 500–552 (AARI…KRKK). 2 positions are modified to phosphoserine: serine 654 and serine 938. Positions 1008 to 1029 (PSADTKSGKIQEQHSSKSEKGL) are disordered. Positions 1013–1027 (KSGKIQEQHSSKSEK) are enriched in basic and acidic residues. Coiled coils occupy residues 1053 to 1082 (LHDS…VELL) and 1498 to 1544 (IQSH…VSSE). Residues 1558-1580 (ADSERTQKSFPTKSNDTLPSSHR) form a disordered region. A compositionally biased stretch (polar residues) spans 1565-1577 (KSFPTKSNDTLPS). At serine 1637 the chain carries Phosphoserine. A coiled-coil region spans residues 1728–1758 (QEKLLVQRQTALQQQIQKHEETLKDFFKDSQ). Composition is skewed to basic and acidic residues over residues 1795–1827 (RHAD…DLGR), 1985–2003 (FSEH…KEEE), and 2100–2112 (DNRD…DSSS). Disordered stretches follow at residues 1795–1834 (RHAD…KPPV), 1979–2004 (LTDP…EEET), and 2085–2117 (HPDF…SHCA). Residue threonine 2473 is modified to Phosphothreonine. The interval 2478–2601 (SLQEAFIKRK…LEKLRAKNTC (124 aa)) is ALMS motif. Positions 2556–2581 (RLYNQLAEVKQQKEEKTKQEAYAQNR) form a coiled coil.

As to quaternary structure, interacts (via ALMS motif) with microtubules; this interaction is direct.

It is found in the cytoplasm. Its subcellular location is the cytoskeleton. It localises to the microtubule organizing center. The protein localises to the centrosome. The protein resides in the centriole. It is found in the spindle. Its function is as follows. Centriole-enriched microtubule-binding protein involved in centriole biogenesis. Essential for the generation of the distal portion of new-born centrioles in a CPAP- and CEP120-mediated elongation dependent manner during the cell cycle S/G2 phase after formation of the initiating cartwheel structure. Required for the recruitment of centriolar proteins, such as POC1B, POC5 and CEP135, into the distal portion of centrioles. Also required for centriole-to-centrosome conversion during mitotic progression, but is dispensable for cartwheel removal or centriole disengagement. Binds to and stabilizes centriolar microtubule. May be involved in ciliogenesis. The sequence is that of Centrosomal protein of 295 kDa from Homo sapiens (Human).